A 285-amino-acid chain; its full sequence is Bifunctional protein FolD (285 aa).

Position 166–168 (166–168 (GAS)) interacts with NADP(+).

The protein belongs to the tetrahydrofolate dehydrogenase/cyclohydrolase family. In terms of assembly, homodimer.

The catalysed reaction is (6R)-5,10-methylene-5,6,7,8-tetrahydrofolate + NADP(+) = (6R)-5,10-methenyltetrahydrofolate + NADPH. It carries out the reaction (6R)-5,10-methenyltetrahydrofolate + H2O = (6R)-10-formyltetrahydrofolate + H(+). It participates in one-carbon metabolism; tetrahydrofolate interconversion. Functionally, catalyzes the oxidation of 5,10-methylenetetrahydrofolate to 5,10-methenyltetrahydrofolate and then the hydrolysis of 5,10-methenyltetrahydrofolate to 10-formyltetrahydrofolate. In Thioalkalivibrio sulfidiphilus (strain HL-EbGR7), this protein is Bifunctional protein FolD.